A 184-amino-acid chain; its full sequence is Small ribosomal subunit protein uS7 (184 aa).

This sequence belongs to the universal ribosomal protein uS7 family. In terms of assembly, part of the 30S ribosomal subunit.

Its function is as follows. One of the primary rRNA binding proteins, it binds directly to 16S rRNA where it nucleates assembly of the head domain of the 30S subunit. Is located at the subunit interface close to the decoding center. The protein is Small ribosomal subunit protein uS7 of Thermoplasma volcanium (strain ATCC 51530 / DSM 4299 / JCM 9571 / NBRC 15438 / GSS1).